Consider the following 257-residue polypeptide: GTP cyclohydrolase III (257 aa).

It belongs to the archaeal-type GTP cyclohydrolase family.

The enzyme catalyses GTP + 3 H2O = 2-amino-5-formylamino-6-(5-phospho-D-ribosylamino)pyrimidin-4(3H)-one + 2 phosphate + 2 H(+). In terms of biological role, catalyzes the formation of 2-amino-5-formylamino-6-ribofuranosylamino-4(3H)-pyrimidinone ribonucleotide monophosphate and inorganic phosphate from GTP. Also has an independent pyrophosphate phosphohydrolase activity. This Halorubrum lacusprofundi (strain ATCC 49239 / DSM 5036 / JCM 8891 / ACAM 34) protein is GTP cyclohydrolase III.